Reading from the N-terminus, the 536-residue chain is Phosphoenolpyruvate carboxykinase (ATP) (536 aa).

Positions 62, 203, and 209 each coordinate substrate. ATP is bound by residues Lys209, His228, and 244–252 (GLSGTGKTT). Mn(2+)-binding residues include Lys209 and His228. Residue Asp265 coordinates Mn(2+). Residues Glu293, Arg329, 445–446 (RI), and Thr451 contribute to the ATP site. Position 329 (Arg329) interacts with substrate.

It belongs to the phosphoenolpyruvate carboxykinase (ATP) family. Monomer. The cofactor is Mn(2+).

Its subcellular location is the cytoplasm. The enzyme catalyses oxaloacetate + ATP = phosphoenolpyruvate + ADP + CO2. Its pathway is carbohydrate biosynthesis; gluconeogenesis. Its function is as follows. Involved in the gluconeogenesis. Catalyzes the conversion of oxaloacetate (OAA) to phosphoenolpyruvate (PEP) through direct phosphoryl transfer between the nucleoside triphosphate and OAA. This chain is Phosphoenolpyruvate carboxykinase (ATP), found in Actinobacillus pleuropneumoniae serotype 5b (strain L20).